A 551-amino-acid chain; its full sequence is MYCVQCEQTMVTPMGNGCSFGQGMCGKTAETSDLQDLLIACLHSLSAWALKAREHGIINHDADNFAPRAFFATLTNVNFDSNRIVGYAQQAIIYRNELIKAISEVEPNPELNHPLAYIELKGISIDQLAEQAKEFALDTDRAEIGEEVHGVRLLALYGLKGAAAYLEHAYVLGKFDNDLYVEYHGFMAWLGTKPRDLNELLEKSLAIGSMNFKVMAMLDAGETETFGNPVPATVNIRPVKGKCILISGHDLKDLKELLEQTEGKGINVYTHGEMLPAHGYPELKKYKHLVGNYGSGWQNQQKEFARFPGAIVMTSNCLIDPNVGDYADRIFTCNIVGWPGVVHLEKHNFAPVIEKALECDGFPYTELEHYITVGFGRKTLIDASDAVIDLVKAGKLSHVFVIGGCDGDKEERHYYTDLAYALPKDTAVLTLGCGKYRFNKLDFGTIDGGLPRLLDAGQCNDTYSAIMLAVTLSQKLGIGLNELPLSIVLSWFEQKAIIVLLTLLALGVKNVYSGPSKPAFLNDNVMNLLHEKFGLSGLTTPEQDFGHIINK.

[2Fe-2S] cluster-binding residues include C3, C6, C18, and C25. Hybrid [4Fe-2O-2S] cluster-binding residues include H249, E273, C317, C405, C433, C459, E493, and K495. C405 is subject to Cysteine persulfide.

Belongs to the HCP family. It depends on [2Fe-2S] cluster as a cofactor. Requires hybrid [4Fe-2O-2S] cluster as cofactor.

Its subcellular location is the cytoplasm. It catalyses the reaction A + NH4(+) + H2O = hydroxylamine + AH2 + H(+). Functionally, catalyzes the reduction of hydroxylamine to form NH(3) and H(2)O. This Actinobacillus pleuropneumoniae serotype 7 (strain AP76) protein is Hydroxylamine reductase.